The sequence spans 515 residues: Rop guanine nucleotide exchange factor 12 (515 aa).

In terms of domain architecture, PRONE spans 83-446 (QARERQLLAD…RAGNKRNTPL (364 aa)). Ser-510 carries the post-translational modification Phosphoserine.

Interacts (via C-terminus) with PRK2. Interacts with PRK6. As to expression, expressed in pollen grains.

Its subcellular location is the cytoplasm. The protein localises to the cell membrane. With respect to regulation, phosphorylation at Ser-510 by PRK2 may release ROPGEF12 auto-inhibition, thereby activating ROPGEF12 and downstream Rop signaling. Guanine-nucleotide exchange factor (GEF) that acts as an activator of Rop (Rho of plants) GTPases by promoting the exchange of GDP for GTP. May be recruited by PRK2 at the plasma membrane to maintain polar Rop activity in the pollen tube and control polarized pollen tube growth. The polypeptide is Rop guanine nucleotide exchange factor 12 (Arabidopsis thaliana (Mouse-ear cress)).